The following is a 232-amino-acid chain: Megakaryocyte and platelet inhibitory receptor G6b (232 aa).

Positions 1–17 are cleaved as a signal peptide; the sequence is MALVLQLLPLLLSKVQG. The Extracellular portion of the chain corresponds to 18–140; it reads NPEVSLEGNP…GSTHGSEYSK (123 aa). 2 N-linked (GlcNAc...) asparagine glycosylation sites follow: Asn-32 and Asn-112. Residues 141-161 traverse the membrane as a helical segment; it reads VLIPLLGFGLVLGLGALGLVW. The Cytoplasmic segment spans residues 162–232; the sequence is WRRSCVPPSH…DASTVYAVVV (71 aa). 2 consecutive short sequence motifs (ITIM motif) follow at residues 200–205 and 226–231; these read LHYADL and TVYAVV. Phosphotyrosine is present on Tyr-202.

In terms of assembly, interacts (via ITIM motif) with PTPN6 and PTPN11. Binds to heparin. Post-translationally, N-glycosylated. In terms of processing, may be O-glycosylated. Phosphorylated.

The protein resides in the cell membrane. In terms of biological role, inhibitory receptor that acts as a critical regulator of hematopoietic lineage differentiation, megakaryocyte function and platelet production. Inhibits platelet aggregation and activation by agonists such as ADP and collagen-related peptide. This regulation of megakaryocate function as well as platelet production ann activation is done through the inhibition (via the 2 ITIM motifs) of the receptors CLEC1B and GP6:FcRgamma signaling. Appears to operate in a calcium-independent manner. The protein is Megakaryocyte and platelet inhibitory receptor G6b of Rattus norvegicus (Rat).